The following is a 227-amino-acid chain: Ribosomal RNA large subunit methyltransferase E (227 aa).

S-adenosyl-L-methionine-binding residues include Gly-78, Trp-80, Asp-103, Asp-119, and Asp-143. Catalysis depends on Lys-183, which acts as the Proton acceptor.

This sequence belongs to the class I-like SAM-binding methyltransferase superfamily. RNA methyltransferase RlmE family.

The protein localises to the cytoplasm. It catalyses the reaction uridine(2552) in 23S rRNA + S-adenosyl-L-methionine = 2'-O-methyluridine(2552) in 23S rRNA + S-adenosyl-L-homocysteine + H(+). Functionally, specifically methylates the uridine in position 2552 of 23S rRNA at the 2'-O position of the ribose in the fully assembled 50S ribosomal subunit. This is Ribosomal RNA large subunit methyltransferase E from Rickettsia akari (strain Hartford).